Here is a 399-residue protein sequence, read N- to C-terminus: Methylthioribose kinase (399 aa).

Residues Asn-40, Lys-57, and 111–113 (EDL) contribute to the ATP site. Asp-229 provides a ligand contact to substrate. 246-248 (DAE) serves as a coordination point for ATP. Residue Arg-344 coordinates substrate.

It belongs to the methylthioribose kinase family. Homodimer.

The enzyme catalyses 5-(methylsulfanyl)-D-ribose + ATP = 5-(methylsulfanyl)-alpha-D-ribose 1-phosphate + ADP + H(+). It participates in amino-acid biosynthesis; L-methionine biosynthesis via salvage pathway; S-methyl-5-thio-alpha-D-ribose 1-phosphate from S-methyl-5'-thioadenosine (hydrolase route): step 2/2. Catalyzes the phosphorylation of methylthioribose into methylthioribose-1-phosphate. The sequence is that of Methylthioribose kinase from Klebsiella pneumoniae (strain 342).